The primary structure comprises 211 residues: ATP-dependent dethiobiotin synthetase BioD (211 aa).

G13–V18 lines the ATP pocket. Residue T17 coordinates Mg(2+). The active site involves K33. Mg(2+) contacts are provided by C47 and E101. Residues E101–G104, P185–L187, and N192 each bind ATP.

Belongs to the dethiobiotin synthetase family. Homodimer. The cofactor is Mg(2+).

Its subcellular location is the cytoplasm. The catalysed reaction is (7R,8S)-7,8-diammoniononanoate + CO2 + ATP = (4R,5S)-dethiobiotin + ADP + phosphate + 3 H(+). The protein operates within cofactor biosynthesis; biotin biosynthesis; biotin from 7,8-diaminononanoate: step 1/2. In terms of biological role, catalyzes a mechanistically unusual reaction, the ATP-dependent insertion of CO2 between the N7 and N8 nitrogen atoms of 7,8-diaminopelargonic acid (DAPA, also called 7,8-diammoniononanoate) to form a ureido ring. The protein is ATP-dependent dethiobiotin synthetase BioD of Bradyrhizobium diazoefficiens (strain JCM 10833 / BCRC 13528 / IAM 13628 / NBRC 14792 / USDA 110).